We begin with the raw amino-acid sequence, 118 residues long: uncharacterized protein (118 aa).

The segment at Ser49 to Asn80 is disordered. Basic residues predominate over residues His61–Pro70.

This is an uncharacterized protein from Saccharomyces cerevisiae (strain ATCC 204508 / S288c) (Baker's yeast).